Here is a 458-residue protein sequence, read N- to C-terminus: Phenylalanine-specific permease (458 aa).

Residues 1–27 (MKNASTVSEDTASNQEPTLHRGLHNRH) lie on the Cytoplasmic side of the membrane. The helical transmembrane segment at 28-48 (IQLIALGGAIGTGLFLGIGPA) threads the bilayer. Over 49–50 (IQ) the chain is Periplasmic. The chain crosses the membrane as a helical span at residues 51 to 71 (MAGPAVLLGYGVAGIIAFLIM). Over 72 to 105 (RQLGEMVVEEPVSGSFAHFAYKYWGPFAGFLSGW) the chain is Cytoplasmic. Residues 106–126 (NYWVMFVLVGMAELTAAGIYM) form a helical membrane-spanning segment. At 127–132 (QYWFPD) the chain is on the periplasmic side. Residues 133–153 (VPTWIWAAAFFIIINAVNLVN) traverse the membrane as a helical segment. The Cytoplasmic portion of the chain corresponds to 154–160 (VRLYGET). A helical transmembrane segment spans residues 161–181 (EFWFALIKVLAIIGMIGFGLW). Residues 182 to 196 (LLFSGHGGEKASIDN) are Periplasmic-facing. A helical transmembrane segment spans residues 197–217 (LWRYGGFFATGWNGLILSLAV). The Cytoplasmic segment spans residues 218 to 250 (IMFSFGGLELIGITAAEARDPEKSIPKAVNQVV). A helical transmembrane segment spans residues 251-271 (YRILLFYIGSLVVLLALYPWV). Topologically, residues 272–288 (EVKSNSSPFVMIFHNLD) are periplasmic. A helical membrane pass occupies residues 289 to 309 (SNVVASALNFVILVASLSVYN). At 310–341 (SGVYSNSRMLFGLSVQGNAPKFLTRVSRRGVP) the chain is on the cytoplasmic side. The helical transmembrane segment at 342 to 362 (INSLMLSGAITSLVVLINYLL) threads the bilayer. At 363–367 (PQKAF) the chain is on the periplasmic side. A helical membrane pass occupies residues 368-388 (GLLMALVVATLLLNWIMICLA). Residues 389–411 (HLRFRAAMRRQGRETQFKALLYP) are Cytoplasmic-facing. A helical membrane pass occupies residues 412 to 432 (FGNYLCIAFLGMILLLMCTMD). Residues 433-434 (DM) are Periplasmic-facing. A helical membrane pass occupies residues 435 to 455 (RLSAILLPVWIVFLFMAFKTL). Residues 456–458 (RRK) are Cytoplasmic-facing.

This sequence belongs to the amino acid-polyamine-organocation (APC) superfamily. Amino acid transporter (AAT) (TC 2.A.3.1) family.

Its subcellular location is the cell inner membrane. It catalyses the reaction L-phenylalanine(in) + H(+)(in) = L-phenylalanine(out) + H(+)(out). Its function is as follows. Permease that is involved in the active transport across the cytoplasmic membrane of phenylalanine. Can also transport tyrosine, but not tryptophan. This chain is Phenylalanine-specific permease, found in Escherichia coli (strain K12).